Here is a 414-residue protein sequence, read N- to C-terminus: Phosphoglycerate kinase (414 aa).

Positions 23, 24, 25, 26, 39, 62, 63, 65, and 66 each coordinate (2R)-3-phosphoglycerate. Position 75 is a phosphotyrosine (Tyr-75). The residue at position 76 (Ser-76) is a Phosphoserine. (2R)-3-phosphoglycerate is bound by residues Leu-121 and Arg-122. At Ser-143 the chain carries Phosphoserine. The (2R)-3-phosphoglycerate site is built by His-168 and Arg-169. Residues Ser-172, Ser-173, and Ser-183 each carry the phosphoserine modification. Residue Gly-211 coordinates ADP. Gly-211 contacts CDP. 2 residues coordinate AMP: Ala-212 and Lys-213. ATP is bound at residue Ala-212. Ala-212 is a Mg(2+) binding site. Mg(2+)-binding residues include Ala-215 and Asp-216. Residue Asp-216 participates in CDP binding. An AMP-binding site is contributed by Lys-217. Lys-217 serves as a coordination point for ATP. Gly-235 provides a ligand contact to ADP. Gly-235 is a binding site for CDP. Position 236 (Gly-236) interacts with AMP. Gly-236 contacts ATP. Phosphoserine occurs at positions 253 and 260. Thr-299 carries the post-translational modification Phosphothreonine. Gly-310 provides a ligand contact to AMP. Residue Gly-310 participates in ATP binding. A Phosphoserine modification is found at Ser-328. CDP-binding residues include Gly-335, Ala-337, and Phe-340. Residue Phe-340 coordinates ADP. Glu-341 provides a ligand contact to AMP. Position 341 (Glu-341) interacts with ATP. Ser-351 is subject to Phosphoserine. Positions 372 and 373 each coordinate ATP. Asp-372 lines the Mg(2+) pocket. Thr-373 is modified (phosphothreonine). Ser-387, Ser-390, Ser-412, and Ser-413 each carry phosphoserine.

The protein belongs to the phosphoglycerate kinase family. As to quaternary structure, monomer. Mg(2+) is required as a cofactor.

The protein resides in the cytoplasm. Its subcellular location is the mitochondrion. The catalysed reaction is (2R)-3-phosphoglycerate + ATP = (2R)-3-phospho-glyceroyl phosphate + ADP. The protein operates within carbohydrate degradation; glycolysis; pyruvate from D-glyceraldehyde 3-phosphate: step 2/5. In terms of biological role, catalyzes one of the two ATP producing reactions in the glycolytic pathway via the reversible conversion of 1,3-diphosphoglycerate to 3-phosphoglycerate. Both L- and D- forms of purine and pyrimidine nucleotides can be used as substrates, but the activity is much lower on pyrimidines. Negatively regulates the biosynthesis of acetyl-CoA from pyruvate in the mitochondrion. The chain is Phosphoglycerate kinase (pgk1) from Schizosaccharomyces pombe (strain 972 / ATCC 24843) (Fission yeast).